A 522-amino-acid polypeptide reads, in one-letter code: Tubulin-specific chaperone E (522 aa).

The CAP-Gly domain occupies 27–71; that stretch reads GNVPPTPGLWLGVEWDNHLRGKHNGTHEGTKYFTCSHPTGGSFIR. 7 LRR repeats span residues 149 to 170, 175 to 196, 201 to 222, 226 to 248, 249 to 270, 274 to 295, and 303 to 324; these read NIMT…AHIS, NLTS…SSLA, NLKV…QCAS, ALEE…NNLQ, NLTI…HTIA, RLKQ…DVDF, and SLTS…NELH. The region spanning 337–379 is the LRRCT domain; it reads NPLMDLDKNPETVRQLIIAKIENLKFLNKTEIFPTERRGAELD.

It belongs to the TBCE family. In terms of assembly, supercomplex made of cofactors A to E. Cofactors A and D function by capturing and stabilizing tubulin in a quasi-native conformation. Cofactor E binds to the cofactor D-tubulin complex; interaction with cofactor C then causes the release of tubulin polypeptides that are committed to the native state.

The protein localises to the cytoplasm. The protein resides in the cytoskeleton. Tubulin-folding protein; involved in the second step of the tubulin folding pathway. In Xenopus laevis (African clawed frog), this protein is Tubulin-specific chaperone E (tbce).